A 295-amino-acid polypeptide reads, in one-letter code: Ribosomal RNA small subunit methyltransferase A (295 aa).

S-adenosyl-L-methionine contacts are provided by N29, L31, G56, E77, D102, and N128.

This sequence belongs to the class I-like SAM-binding methyltransferase superfamily. rRNA adenine N(6)-methyltransferase family. RsmA subfamily.

The protein resides in the cytoplasm. The catalysed reaction is adenosine(1518)/adenosine(1519) in 16S rRNA + 4 S-adenosyl-L-methionine = N(6)-dimethyladenosine(1518)/N(6)-dimethyladenosine(1519) in 16S rRNA + 4 S-adenosyl-L-homocysteine + 4 H(+). Functionally, specifically dimethylates two adjacent adenosines (A1518 and A1519) in the loop of a conserved hairpin near the 3'-end of 16S rRNA in the 30S particle. May play a critical role in biogenesis of 30S subunits. This chain is Ribosomal RNA small subunit methyltransferase A, found in Listeria monocytogenes serotype 4a (strain HCC23).